The chain runs to 315 residues: Tyrosine recombinase XerC (315 aa).

The region spanning 13-104 is the Core-binding (CB) domain; sequence ADLAAAREEW…GVRSLLRHLE (92 aa). The 185-residue stretch at 125–309 folds into the Tyr recombinase domain; the sequence is SLPKPLTADD…DTQRLLEVYD (185 aa). Catalysis depends on residues Arg-168, Lys-193, His-261, Arg-264, and His-287. Tyr-296 functions as the O-(3'-phospho-DNA)-tyrosine intermediate in the catalytic mechanism.

It belongs to the 'phage' integrase family. XerC subfamily. In terms of assembly, forms a cyclic heterotetrameric complex composed of two molecules of XerC and two molecules of XerD.

Its subcellular location is the cytoplasm. Functionally, site-specific tyrosine recombinase, which acts by catalyzing the cutting and rejoining of the recombining DNA molecules. The XerC-XerD complex is essential to convert dimers of the bacterial chromosome into monomers to permit their segregation at cell division. It also contributes to the segregational stability of plasmids. This is Tyrosine recombinase XerC from Brucella suis biovar 1 (strain 1330).